We begin with the raw amino-acid sequence, 411 residues long: Tyrosine--tRNA ligase (411 aa).

L-tyrosine is bound at residue tyrosine 34. Residues 39 to 48 (CTATSLHIGS) carry the 'HIGH' region motif. Positions 171 and 175 each coordinate L-tyrosine. The short motif at 231–235 (KMGKT) is the 'KMSKS' region element. Lysine 234 contacts ATP. The 67-residue stretch at 345–411 (ISAYELFHEA…GKKRHILVRV (67 aa)) folds into the S4 RNA-binding domain.

The protein belongs to the class-I aminoacyl-tRNA synthetase family. TyrS type 1 subfamily. Homodimer.

It is found in the cytoplasm. It catalyses the reaction tRNA(Tyr) + L-tyrosine + ATP = L-tyrosyl-tRNA(Tyr) + AMP + diphosphate + H(+). Catalyzes the attachment of tyrosine to tRNA(Tyr) in a two-step reaction: tyrosine is first activated by ATP to form Tyr-AMP and then transferred to the acceptor end of tRNA(Tyr). This Rickettsia felis (strain ATCC VR-1525 / URRWXCal2) (Rickettsia azadi) protein is Tyrosine--tRNA ligase.